The following is a 416-amino-acid chain: 5-hydroxytryptamine receptor 1A-beta (416 aa).

Topologically, residues 1-35 are extracellular; that stretch reads MEGTNNTTGWTHFDSTSNRTSKSFDEEVKLSYQVV. N-linked (GlcNAc...) asparagine glycans are attached at residues Asn-5, Asn-6, and Asn-18. A helical transmembrane segment spans residues 36–56; sequence TSFLLGALILCSIFGNACVVA. The Cytoplasmic portion of the chain corresponds to 57-70; that stretch reads AIALERSLQNVANY. A helical transmembrane segment spans residues 71–95; the sequence is LIGSLAVTDLMVSVLVLPMAALYQV. Over 96 to 104 the chain is Extracellular; the sequence is LNRWTLGQI. Residues 105 to 129 traverse the membrane as a helical segment; sequence PCDIFISLDMLCCTSSILHLCVIAL. Cys-106 and Cys-189 are disulfide-bonded. Residues Asp-113 and Cys-117 each contribute to the serotonin site. Residues 130–132 carry the DRY motif; important for ligand-induced conformation changes motif; the sequence is DRY. Topologically, residues 130–149 are cytoplasmic; the sequence is DRYWAITEPIDYMKKRTPRR. A helical membrane pass occupies residues 150-171; it reads AAVLISVTWLVGFSISIPPMLI. Over 172-195 the chain is Extracellular; sequence MRSQPSSMAEDRANSKQCKITQDP. The helical transmembrane segment at 196 to 218 threads the bilayer; that stretch reads WYTIYSTFGAFYIPLTLMLVLYG. The Cytoplasmic portion of the chain corresponds to 219 to 340; the sequence is RIFKAARFRI…LARERKTVKT (122 aa). The 1D-myo-inositol 4-phosphate site is built by Lys-339, Thr-340, and Gly-346. A helical membrane pass occupies residues 341–364; it reads LGIIMGTFILCWLPFFIVALVMPF. The Extracellular segment spans residues 365–372; that stretch reads CQESCFMP. A helical membrane pass occupies residues 373–397; it reads HWLKDVINWLGYSNSLLNPIIYAYF. The short motif at 390–394 is the NPxxY motif; important for ligand-induced conformation changes and signaling element; that stretch reads NPIIY. 1D-myo-inositol 4-phosphate is bound by residues Phe-397, Asn-398, and Lys-399. Residues 398-416 lie on the Cytoplasmic side of the membrane; the sequence is NKDFQSAFKKIIKCHFCRA.

The protein belongs to the G-protein coupled receptor 1 family. 5-hydroxytryptamine receptor subfamily.

It localises to the cell membrane. G-protein coupled receptor activity is regulated by lipids: phosphatidylinositol 4-phosphate increases HTR1A-mediated activity. In terms of biological role, G-protein coupled receptor for 5-hydroxytryptamine (serotonin). Also functions as a receptor for various drugs and psychoactive substances. Ligand binding causes a conformation change that triggers signaling via guanine nucleotide-binding proteins (G proteins) and modulates the activity of downstream effectors, such as adenylate cyclase. HTR1A is coupled to G(i)/G(o) G alpha proteins and mediates inhibitory neurotransmission: signaling inhibits adenylate cyclase activity and activates a phosphatidylinositol-calcium second messenger system that regulates the release of Ca(2+) ions from intracellular stores. Beta-arrestin family members regulate signaling by mediating both receptor desensitization and resensitization processes. This is 5-hydroxytryptamine receptor 1A-beta (htr1a-B) from Takifugu rubripes (Japanese pufferfish).